Here is a 1247-residue protein sequence, read N- to C-terminus: Nitric oxide synthase (1247 aa).

The disordered stretch occupies residues Glu-13 to Tyr-33. Position 146 (Ser-146) interacts with (6R)-L-erythro-5,6,7,8-tetrahydrobiopterin. Cys-224 provides a ligand contact to heme b. The L-arginine site is built by Gln-287, Trp-396, Tyr-397, Glu-401, and Asn-406. Trp-487 and Phe-500 together coordinate (6R)-L-erythro-5,6,7,8-tetrahydrobiopterin. Tyr-515 is a binding site for heme b. The tract at residues Pro-537–Phe-557 is calmodulin-binding. A Flavodoxin-like domain is found at Ala-567–Phe-766. Position 712-743 (Val-712–Met-743) interacts with FMN. The region spanning Asn-795–Ser-1065 is the FAD-binding FR-type domain. FAD contacts are provided by residues Tyr-855 to Ala-866 and Leu-998 to Ser-1008. Residues Ile-1073 to Trp-1091 and Lys-1170 to Val-1185 each bind NADP(+).

Belongs to the NOS family. Heme b serves as cofactor. The cofactor is FAD. It depends on FMN as a cofactor.

It carries out the reaction 2 L-arginine + 3 NADPH + 4 O2 + H(+) = 2 L-citrulline + 2 nitric oxide + 3 NADP(+) + 4 H2O. Its activity is regulated as follows. Stimulated by calcium/calmodulin. Its function is as follows. Produces nitric oxide (NO) which is a messenger molecule with diverse functions throughout the body. Nitric oxide limits plasmodium development in the midgut. This chain is Nitric oxide synthase, found in Anopheles stephensi (Indo-Pakistan malaria mosquito).